Here is a 203-residue protein sequence, read N- to C-terminus: FMN-dependent NADH:quinone oxidoreductase 5 (203 aa).

FMN-binding positions include Ser9, 15-17 (SAS), 95-98 (MYNF), and 139-142 (TSGG).

It belongs to the azoreductase type 1 family. In terms of assembly, homodimer. It depends on FMN as a cofactor.

It carries out the reaction 2 a quinone + NADH + H(+) = 2 a 1,4-benzosemiquinone + NAD(+). The catalysed reaction is N,N-dimethyl-1,4-phenylenediamine + anthranilate + 2 NAD(+) = 2-(4-dimethylaminophenyl)diazenylbenzoate + 2 NADH + 2 H(+). Its function is as follows. Quinone reductase that provides resistance to thiol-specific stress caused by electrophilic quinones. Also exhibits azoreductase activity. Catalyzes the reductive cleavage of the azo bond in aromatic azo compounds to the corresponding amines. This Pseudomonas fluorescens (strain ATCC BAA-477 / NRRL B-23932 / Pf-5) protein is FMN-dependent NADH:quinone oxidoreductase 5.